We begin with the raw amino-acid sequence, 631 residues long: Glutamyl-tRNA(Gln) amidotransferase subunit E (631 aa).

Belongs to the GatB/GatE family. GatE subfamily. In terms of assembly, heterodimer of GatD and GatE.

It carries out the reaction L-glutamyl-tRNA(Gln) + L-glutamine + ATP + H2O = L-glutaminyl-tRNA(Gln) + L-glutamate + ADP + phosphate + H(+). Functionally, allows the formation of correctly charged Gln-tRNA(Gln) through the transamidation of misacylated Glu-tRNA(Gln) in organisms which lack glutaminyl-tRNA synthetase. The reaction takes place in the presence of glutamine and ATP through an activated gamma-phospho-Glu-tRNA(Gln). The GatDE system is specific for glutamate and does not act on aspartate. In Methanococcus maripaludis (strain C5 / ATCC BAA-1333), this protein is Glutamyl-tRNA(Gln) amidotransferase subunit E.